The chain runs to 265 residues: Glutamate racemase 2 (265 aa).

Substrate is bound by residues 7–8 (DS) and 39–40 (YG). Catalysis depends on C70, which acts as the Proton donor/acceptor. 71–72 (NT) is a substrate binding site. The active-site Proton donor/acceptor is the C182. 183-184 (TH) lines the substrate pocket.

It belongs to the aspartate/glutamate racemases family.

The enzyme catalyses L-glutamate = D-glutamate. The protein operates within cell wall biogenesis; peptidoglycan biosynthesis. Provides the (R)-glutamate required for cell wall biosynthesis. The protein is Glutamate racemase 2 (yrpC) of Bacillus subtilis (strain 168).